The primary structure comprises 435 residues: Monodehydroascorbate reductase 3, cytosolic (435 aa).

Residues 14–17, Glu-41, Arg-48, Lys-53, Ile-96, and 147–148 each bind FAD; these read GGVA and RE. NAD(+) contacts are provided by residues 172 to 178, Glu-196, Arg-202, and Gly-261; that span reads GGYIGLE. Position 174 to 178 (174 to 178) interacts with NADP(+); that stretch reads YIGLE. Residues Arg-202 and Gly-261 each contribute to the NADP(+) site. Residue Asp-298 participates in FAD binding. 314–315 lines the NAD(+) pocket; that stretch reads EH. Residue 314-315 coordinates NADP(+); that stretch reads EH. Val-316 is an FAD binding site. Arg-320 is a binding site for L-ascorbate. An FAD-binding site is contributed by Tyr-349. Tyr-349 is an NAD(+) binding site. An NADP(+)-binding site is contributed by Tyr-349. Arg-351 contacts L-ascorbate.

The protein belongs to the FAD-dependent oxidoreductase family. It depends on FAD as a cofactor.

It is found in the cytoplasm. It catalyses the reaction 2 monodehydro-L-ascorbate radical + NADH + H(+) = 2 L-ascorbate + NAD(+). Functionally, catalyzes the conversion of monodehydroascorbate to ascorbate, oxidizing NADH in the process. Ascorbate is a major antioxidant against reactive oxygen species (ROS) and nitric oxide (NO). Can use NADPH as electron donor, but possesses lower activity compared to NADH as electron donor. This is Monodehydroascorbate reductase 3, cytosolic from Oryza sativa subsp. japonica (Rice).